Reading from the N-terminus, the 341-residue chain is uncharacterized protein (341 aa).

This is an uncharacterized protein from Mycobacterium bovis (strain ATCC BAA-935 / AF2122/97).